Consider the following 140-residue polypeptide: Small ribosomal subunit protein uS19 (140 aa).

It belongs to the universal ribosomal protein uS19 family.

In terms of biological role, protein S19 forms a complex with S13 that binds strongly to the 16S ribosomal RNA. The sequence is that of Small ribosomal subunit protein uS19 from Methanocella arvoryzae (strain DSM 22066 / NBRC 105507 / MRE50).